Reading from the N-terminus, the 308-residue chain is Ribosomal RNA small subunit methyltransferase H (308 aa).

S-adenosyl-L-methionine is bound by residues 46-48, Asp63, Tyr87, Asp108, and Gln115; that span reads AGH. The segment at 269 to 308 is disordered; it reads TKRPVEASEEERGRNPRARSAKLRAAEKVAAPEGLPEVEV. Basic and acidic residues predominate over residues 271 to 282; it reads RPVEASEEERGR.

Belongs to the methyltransferase superfamily. RsmH family.

The protein localises to the cytoplasm. It carries out the reaction cytidine(1402) in 16S rRNA + S-adenosyl-L-methionine = N(4)-methylcytidine(1402) in 16S rRNA + S-adenosyl-L-homocysteine + H(+). In terms of biological role, specifically methylates the N4 position of cytidine in position 1402 (C1402) of 16S rRNA. The polypeptide is Ribosomal RNA small subunit methyltransferase H (Deinococcus geothermalis (strain DSM 11300 / CIP 105573 / AG-3a)).